The chain runs to 1033 residues: Probable LRR receptor-like serine/threonine-protein kinase At1g56140 (1033 aa).

Positions 1-28 (MLRLWRYLCLLLTVWFLCNFGPVYVVRA) are cleaved as a signal peptide. Residues 29-636 (QNRTGATTHP…PSKGKSMTGT (608 aa)) lie on the Extracellular side of the membrane. Residues Asn-30, Asn-60, and Asn-94 are each glycosylated (N-linked (GlcNAc...) asparagine). 13 LRR repeats span residues 97-121 (ICRI…LWTL), 122-145 (EYLT…LGNL), 147-169 (RMRW…IGLL), 170-193 (TDLR…IGRC), 195-217 (KLQQ…FANL), 241-264 (WTKL…SFSN), 265-288 (LTSL…FIKD), 289-313 (MKSL…IGEY), 314-337 (SSLR…LFNL), 339-361 (QLTH…KGQS), 363-382 (SNVD…WVSL), 383-406 (PNLN…VLSG), and 422-445 (IYSD…VFER). Asn-144 is a glycosylation site (N-linked (GlcNAc...) asparagine). Asn-181 carries an N-linked (GlcNAc...) asparagine glycan. Asn-264, Asn-280, and Asn-301 each carry an N-linked (GlcNAc...) asparagine glycan. Asn-347 and Asn-351 each carry an N-linked (GlcNAc...) asparagine glycan. Asn-393 is a glycosylation site (N-linked (GlcNAc...) asparagine). Asn-579 carries N-linked (GlcNAc...) asparagine glycosylation. A helical transmembrane segment spans residues 637–657 (IVGVIVGVGLLSIISGVVIFI). Residues 658 to 1033 (IRKRRKRYTD…MLGAQMNEGR (376 aa)) are Cytoplasmic-facing. At Thr-682 the chain carries Phosphothreonine. The region spanning 693 to 951 (FDPSNKLGEG…LCTQTSHALR (259 aa)) is the Protein kinase domain. ATP is bound by residues 699–707 (LGEGGFGPV) and Lys-721. Tyr-766 is modified (phosphotyrosine). Residue Asp-817 is the Proton acceptor of the active site. 2 positions are modified to phosphoserine: Ser-821 and Ser-850. Residues Thr-851 and Thr-856 each carry the phosphothreonine modification. Tyr-864 carries the phosphotyrosine modification. Residues 1012-1033 (SEISPRNNDARPMLGAQMNEGR) are disordered.

It belongs to the protein kinase superfamily. Ser/Thr protein kinase family.

The protein localises to the membrane. The enzyme catalyses L-seryl-[protein] + ATP = O-phospho-L-seryl-[protein] + ADP + H(+). It carries out the reaction L-threonyl-[protein] + ATP = O-phospho-L-threonyl-[protein] + ADP + H(+). The sequence is that of Probable LRR receptor-like serine/threonine-protein kinase At1g56140 from Arabidopsis thaliana (Mouse-ear cress).